Here is a 1357-residue protein sequence, read N- to C-terminus: DNA-directed RNA polymerase subunit beta (1357 aa).

This sequence belongs to the RNA polymerase beta chain family. In terms of assembly, the RNAP catalytic core consists of 2 alpha, 1 beta, 1 beta' and 1 omega subunit. When a sigma factor is associated with the core the holoenzyme is formed, which can initiate transcription.

The enzyme catalyses RNA(n) + a ribonucleoside 5'-triphosphate = RNA(n+1) + diphosphate. Its function is as follows. DNA-dependent RNA polymerase catalyzes the transcription of DNA into RNA using the four ribonucleoside triphosphates as substrates. This chain is DNA-directed RNA polymerase subunit beta, found in Pseudomonas aeruginosa (strain ATCC 15692 / DSM 22644 / CIP 104116 / JCM 14847 / LMG 12228 / 1C / PRS 101 / PAO1).